A 482-amino-acid chain; its full sequence is MHNHPRHEGHLHTVNVKYGYVVFLLSIVHIVVVATVPRLRKVGSSSTRRSLPWLPQIVIWAILLAILGVWNIHEWSEHYNVSIKRFGRMAYCLLPFDILLAYKYWPLENYLQNLNLHKWMSRIIVVCSMIHGIGYFVKWFVEGTFFHHLFKIDNLLGVVVFAAAVVLLVVSVALFRRQSYRLFYVSHNITIGMFVVLILFHARPPVTLFVAICGLLLAILFFIKFQTYSATPVSLKEVPNSSLVLVSFPWPDHIATSFKPGSHVRINHSNRSWKSWVFASHPFTSATLPGTSETLDLVVKKGTFIFAKDTQYNLSSPYTSLSFDDNSISRFDQSVIICGGSGISLAIPVFKYLITKLDVTMIWCTRSKADLFVLRHYSLLDKVQVYITGNDSLSVEDESEGHGLMHETIELENLEESSKNSEATKQPEILRGRPDLNNVCASLETTPNSSCVISCGPRSLVKDCENWCRNHKIESVTEIYEM.

7 consecutive transmembrane segments (helical) span residues 16 to 36 (VKYGYVVFLLSIVHIVVVATV), 50 to 70 (SLPWLPQIVIWAILLAILGVW), 87 to 106 (GRMAYCLLPFDILLAYKYWP), 123 to 143 (IIVVCSMIHGIGYFVKWFVEG), 155 to 175 (LLGVVVFAAAVVLLVVSVALF), 182 to 202 (LFYVSHNITIGMFVVLILFHA), and 205 to 225 (PVTLFVAICGLLLAILFFIKF). A Ferric oxidoreductase domain is found at 86-198 (FGRMAYCLLP…ITIGMFVVLI (113 aa)). In terms of domain architecture, FAD-binding FR-type spans 225–348 (FQTYSATPVS…GGSGISLAIP (124 aa)).

It belongs to the ferric reductase (FRE) family. AIM14 subfamily.

It localises to the membrane. In terms of biological role, probable cell surface metalloreductase. May be involved in iron or copper homeostasis. This is Probable metalloreductase AIM14 (AIM14) from Meyerozyma guilliermondii (strain ATCC 6260 / CBS 566 / DSM 6381 / JCM 1539 / NBRC 10279 / NRRL Y-324) (Yeast).